Reading from the N-terminus, the 165-residue chain is Neurotrophin-3 (165 aa).

The first 3 residues, 1–3 (IQS), serve as a signal peptide directing secretion. Residues 4 to 119 (TSMDQGSLSE…VLNQTSRRKR (116 aa)) constitute a propeptide that is removed on maturation. Residue Asn-112 is glycosylated (N-linked (GlcNAc...) asparagine).

It belongs to the NGF-beta family.

Its subcellular location is the secreted. Seems to promote the survival of visceral and proprioceptive sensory neurons. This Morelia spilota (Carpet python) protein is Neurotrophin-3 (NTF3).